The chain runs to 342 residues: Renalase (342 aa).

The N-terminal stretch at 1-17 is a signal peptide; the sequence is MSRVLVVGAGLTGSLCA. FAD contacts are provided by residues threonine 12, arginine 42, and 61–62; that span reads QY.

This sequence belongs to the renalase family. FAD serves as cofactor. As to expression, expressed predominantly in kidney and testis with lower levels in liver, heart and embryo and weak expression in brain and skeletal muscle.

The protein localises to the secreted. The catalysed reaction is 1,2-dihydro-beta-NAD + O2 + H(+) = H2O2 + NAD(+). It catalyses the reaction 1,2-dihydro-beta-NADP + O2 + H(+) = H2O2 + NADP(+). The enzyme catalyses 1,6-dihydro-beta-NADP + O2 + H(+) = H2O2 + NADP(+). It carries out the reaction 1,6-dihydro-beta-NAD + O2 + H(+) = H2O2 + NAD(+). Its function is as follows. Catalyzes the oxidation of the less abundant 1,2-dihydro-beta-NAD(P) and 1,6-dihydro-beta-NAD(P) to form beta-NAD(P)(+). The enzyme hormone is secreted by the kidney, and circulates in blood and modulates cardiac function and systemic blood pressure. Lowers blood pressure in vivo by decreasing cardiac contractility and heart rate and preventing a compensatory increase in peripheral vascular tone, suggesting a causal link to the increased plasma catecholamine and heightened cardiovascular risk. High concentrations of catecholamines activate plasma renalase and promotes its secretion and synthesis. This is Renalase from Mus musculus (Mouse).